The following is a 515-amino-acid chain: MKTKFTKKTVLKFFGILFAILLLSVLILFSVVIGRTFTFKVNRELGQWENTSTIYPYLSPEQREKLLDNFKVAVQIPTVSFSESDQNITALQEFDLLLRRVFPKVFSSSLVRHEVVGNYSHLFTVVGADAGLEPYMLLAHIDVVPANEAGGWDAPPFSAQEIDGFIYGRGTIDNKQSVMGILQALEYLLERGYTPRRTFYIGLGHDEEINGEEGAVKIVNLLKSRGVKLLYVLDEGLTIMDGVVDGLNEPAALIGVSEKGQTTVKLSVSTPPGHSSMPPRESSIGILASAVARLEKNRMPNLFGHGPERATFEHLAHKFGWSYRMIMSNLWLFSSLLSSVLEGQPDTNAFVRTTTAVTMFNSGVKINVMPAHAEAFVNFRIHSSQTVQGVLNRIESTVSDKRVKVEFINGFDPLPIGSYEDDTFGYQIIKKSVQDIFPQVTVTPGICVANTDSRHYTQLSPDIYRFAPSWYKPGDSARFHGVNERISIQNYEEIVLFYFQLMQNSDVRNLPTLRS.

A signal peptide spans 1-34 (MKTKFTKKTVLKFFGILFAILLLSVLILFSVVIG). N-linked (GlcNAc...) asparagine glycosylation is found at Asn50, Asn87, and Asn118. His140 is a Zn(2+) binding site. Asp142 is a catalytic residue. Position 173 (Asp173) interacts with Zn(2+). Glu207 (proton acceptor) is an active-site residue. Residues Glu208, Asp234, and His480 each contribute to the Zn(2+) site.

It belongs to the peptidase M20A family. Requires Zn(2+) as cofactor.

The protein localises to the secreted. It catalyses the reaction an N-acyl-L-amino acid + H2O = an L-alpha-amino acid + a carboxylate. It carries out the reaction an N-acyl-aromatic L-alpha-amino acid + H2O = an aromatic L-alpha-amino acid + a carboxylate. The enzyme catalyses N-(5Z,8Z,11Z,14Z)-eicosatetraenoyl-glycine + H2O = (5Z,8Z,11Z,14Z)-eicosatetraenoate + glycine. The catalysed reaction is N-hexadecanoyl-L-phenylalanine + H2O = hexadecanoate + L-phenylalanine. It catalyses the reaction N-octadecanoyl-L-phenylalanine + H2O = octadecanoate + L-phenylalanine. It carries out the reaction N-(4Z,7Z,10Z,13Z,16Z,19Z-docosahexaenoyl)-L-phenylalanine + H2O = (4Z,7Z,10Z,13Z,16Z,19Z)-docosahexaenoate + L-phenylalanine. The enzyme catalyses N-(9Z-octadecenoyl)-L-asparagine + H2O = L-asparagine + (9Z)-octadecenoate. The catalysed reaction is (9Z)-octadecenoate + glycine = N-(9Z-octadecenoyl)glycine + H2O. It catalyses the reaction N-(9Z-octadecenoyl)-L-lysine + H2O = L-lysine + (9Z)-octadecenoate. It carries out the reaction N-(9Z-octadecenoyl)-L-methionine + H2O = (9Z)-octadecenoate + L-methionine. The enzyme catalyses N-(9Z-octadecenoyl)-L-serine + H2O = L-serine + (9Z)-octadecenoate. The catalysed reaction is N-(9Z-octadecenoyl)-L-tryptophan + H2O = L-tryptophan + (9Z)-octadecenoate. It catalyses the reaction N-(9Z-octadecenoyl)-L-tyrosine + H2O = L-tyrosine + (9Z)-octadecenoate. It carries out the reaction N-(9Z-octadecenoyl)-L-glutamine + H2O = L-glutamine + (9Z)-octadecenoate. The enzyme catalyses N-(5Z,8Z,11Z,14Z-eicosatetraenoyl)-L-serine + H2O = (5Z,8Z,11Z,14Z)-eicosatetraenoate + L-serine. The catalysed reaction is (5Z,8Z,11Z,14Z)-eicosatetraenoate + L-phenylalanine = N-(5Z,8Z,11Z,14Z-eicosatetraenoyl)-L-phenylalanine + H2O. It catalyses the reaction N-(9Z-octadecenoyl)-L-leucine + H2O = L-leucine + (9Z)-octadecenoate. It carries out the reaction L-phenylalanine + (9Z)-octadecenoate = N-(9Z-octadecenoyl)-L-phenylalanine + H2O. It functions in the pathway amino-acid metabolism. It participates in energy metabolism; electron transfer. The protein operates within lipid metabolism; fatty acid metabolism. With respect to regulation, lipoproteins are powerful coactivators of PM20D1 activity in vitro and NAA biosynthesis in vivo. Functionally, secreted enzyme that regulates the endogenous N-fatty acyl amino acid (NAAs) tissue and circulating levels by functioning as a bidirectional NAA synthase/hydrolase. It condenses free fatty acids and free amino acids to generate NAAs and bidirectionally catalyzes the reverse hydrolysis reaction. Some of these NAAs stimulate oxidative metabolism via mitochondrial uncoupling, increasing energy expenditure in a UPC1-independent manner. Thereby, this secreted protein may indirectly regulate whole body energy expenditure. PM20D1 circulates in tight association with both low- and high-density (LDL and HDL,respectively) lipoprotein particles. The sequence is that of N-fatty-acyl-amino acid synthase/hydrolase PM20D1.1 from Danio rerio (Zebrafish).